The following is a 374-amino-acid chain: Dispase autolysis-inducing protein (374 aa).

An N-terminal signal peptide occupies residues 1–26 (MKRMGWAVTAAVTTIVLAQSSLAAQA).

Its subcellular location is the secreted. Induces autolysis of dispase and thermolysin. The sequence is that of Dispase autolysis-inducing protein (daip) from Streptomyces mobaraensis (Streptoverticillium mobaraense).